An 81-amino-acid polypeptide reads, in one-letter code: Cytotoxin 4 (81 aa).

The signal sequence occupies residues methionine 1–threonine 21. Cystine bridges form between cysteine 24–cysteine 42, cysteine 35–cysteine 59, cysteine 63–cysteine 74, and cysteine 75–cysteine 80.

It belongs to the three-finger toxin family. Short-chain subfamily. Type IA cytotoxin sub-subfamily. In terms of assembly, monomer in solution; Homodimer and oligomer in the presence of negatively charged lipids forming a pore with a size ranging between 20 and 30 Angstroms. Expressed by the venom gland.

It is found in the secreted. The protein localises to the target cell membrane. Functionally, basic protein that bind to cell membrane and depolarizes cardiomyocytes. This cytotoxin also shows lytic activities, but 2-fold more important than that of CTX-A2. It binds to the integrin alpha-V/beta-3 with a moderate affinity. Inhibits protein kinase C. It may interact with sulfatides in the cell membrane, which induces pore formation and cell internalization and is responsible for cytotoxicity in cardiomyocytes. It may also target the mitochondrial membrane and induces mitochondrial swelling and fragmentation. In Naja atra (Chinese cobra), this protein is Cytotoxin 4.